The following is a 963-amino-acid chain: Kinesin-1 heavy chain (963 aa).

Residue alanine 2 is modified to N-acetylalanine. Residues 8 to 325 form the Kinesin motor domain; sequence NIKVMCRFRP…LLFGQRAKTI (318 aa). ATP is bound at residue 85–92; the sequence is GQTSSGKT. Lysine 213 participates in a covalent cross-link: Glycyl lysine isopeptide (Lys-Gly) (interchain with G-Cter in SUMO2). A coiled-coil region spans residues 329-914; that stretch reads VCVNVELTAE…AVRSKNMARR (586 aa). A disordered region spans residues 908-963; it reads SKNMARRGHSAQIAKPIRPGQHPAASPTHPGTVRGGGSFVQNNQPVGLRGGGGKQS. The globular stretch occupies residues 915–963; the sequence is GHSAQIAKPIRPGQHPAASPTHPGTVRGGGSFVQNNQPVGLRGGGGKQS. Phosphoserine is present on residues serine 933 and serine 945. Arginine 956 carries the post-translational modification Omega-N-methylarginine.

This sequence belongs to the TRAFAC class myosin-kinesin ATPase superfamily. Kinesin family. Kinesin subfamily. In terms of assembly, oligomer composed of two heavy chains and two light chains. Interacts with GRIP1 and PPP1R42. Interacts with SYBU. Interacts with JAKMIP1. Interacts with PLEKHM2. Interacts with ECPAS. Interacts with ZFYVE27. Found in a complex with OGT, RHOT1, RHOT2 and TRAK1. Interacts with APP (via cytoplasmic domain).

The protein resides in the cytoplasm. Its subcellular location is the cytoskeleton. The protein localises to the cytolytic granule membrane. It is found in the lysosome membrane. Microtubule-dependent motor required for normal distribution of mitochondria and lysosomes. May be involved in the mechanisms of growth arrest induced by exposure to DNA-damaging drugs or by cellular senescence. Can induce formation of neurite-like membrane protrusions in non-neuronal cells in a ZFYVE27-dependent manner. Regulates centrosome and nuclear positioning during mitotic entry. During the G2 phase of the cell cycle in a BICD2-dependent manner, antagonizes dynein function and drives the separation of nuclei and centrosomes. Required for anterograde axonal transportation of MAPK8IP3/JIP3 which is essential for MAPK8IP3/JIP3 function in axon elongation. Through binding with PLEKHM2 and ARL8B, directs lysosome movement toward microtubule plus ends. Involved in NK cell-mediated cytotoxicity. Drives the polarization of cytolytic granules and microtubule-organizing centers (MTOCs) toward the immune synapse between effector NK lymphocytes and target cells. The protein is Kinesin-1 heavy chain (Kif5b) of Mus musculus (Mouse).